The sequence spans 255 residues: tRNA1(Val) (adenine(37)-N6)-methyltransferase (255 aa).

This sequence belongs to the methyltransferase superfamily. tRNA (adenine-N(6)-)-methyltransferase family.

The protein localises to the cytoplasm. The enzyme catalyses adenosine(37) in tRNA1(Val) + S-adenosyl-L-methionine = N(6)-methyladenosine(37) in tRNA1(Val) + S-adenosyl-L-homocysteine + H(+). Specifically methylates the adenine in position 37 of tRNA(1)(Val) (anticodon cmo5UAC). The protein is tRNA1(Val) (adenine(37)-N6)-methyltransferase of Porphyromonas gingivalis (strain ATCC 33277 / DSM 20709 / CIP 103683 / JCM 12257 / NCTC 11834 / 2561).